A 451-amino-acid polypeptide reads, in one-letter code: MTRKFFGTDGIRGQANSFPMTPEIAMKVGMAVGYIFRRKGQASRAVVGKDTRRSGYMLEKALVAGFTAAGMDVFLLGPIPTPAVAMLCRSLRADIGVMISASHNPFYDNGIKLFGPDGFKLSDQIELQIEAMIEGDMTPFLASHGDVGRAKRVDGDIYRYIEFAKRTLPRNISLNGLRVVVDCANGAGYKVAPAALWELGAEVITINNEPNGININEDCGSTHPIGLMKKVHEVRADVGIALDGDADRVLLVDENGTVIDGDQLMAVIAESWAASNRLEGGGIVATVMSNLGLERFLADRNLTLARTKVGDRYVVEHMREHGFNVGGEQSGHIVLSDFATTGDGLISALQILAVAQEQNKPISDVCRKFQPVPQLLKNVRTTGGKPLENKRVKSAIDEAKERLGGQGRLVIRPSGTEPLIRVMAEGDDRGLVEKVVNDIIDVISSESSAAA.

Ser-102 functions as the Phosphoserine intermediate in the catalytic mechanism. Ser-102, Asp-243, Asp-245, and Asp-247 together coordinate Mg(2+). Ser-102 bears the Phosphoserine mark.

Belongs to the phosphohexose mutase family. It depends on Mg(2+) as a cofactor. In terms of processing, activated by phosphorylation.

The catalysed reaction is alpha-D-glucosamine 1-phosphate = D-glucosamine 6-phosphate. Catalyzes the conversion of glucosamine-6-phosphate to glucosamine-1-phosphate. The protein is Phosphoglucosamine mutase of Brucella abortus (strain 2308).